Reading from the N-terminus, the 70-residue chain is Protein SlyX homolog (70 aa).

It belongs to the SlyX family.

The protein is Protein SlyX homolog of Pseudoalteromonas atlantica (strain T6c / ATCC BAA-1087).